The chain runs to 254 residues: Proteasome activator complex subunit 3 (254 aa).

An N6-acetyllysine mark is found at Lys6 and Lys14. N6-acetyllysine; by P300/CBP is present on Lys195.

As to quaternary structure, homoheptamer. In terms of processing, acetylation at the major site Lys-195 is important for oligomerization and ability to degrade its target substrates. Deacetylated by SIRT1.

Its function is as follows. Implicated in immunoproteasome assembly and required for efficient antigen processing. The PA28 activator complex enhances the generation of class I binding peptides by altering the cleavage pattern of the proteasome. This Gallus gallus (Chicken) protein is Proteasome activator complex subunit 3.